The following is a 186-amino-acid chain: Ribonuclease HII (186 aa).

The RNase H type-2 domain maps to 2 to 186 (KILAGVDEVG…KTFSPISDLL (185 aa)). Residues aspartate 8, glutamate 9, and aspartate 99 each coordinate a divalent metal cation.

Belongs to the RNase HII family. Mn(2+) is required as a cofactor. Mg(2+) serves as cofactor.

The protein resides in the cytoplasm. The catalysed reaction is Endonucleolytic cleavage to 5'-phosphomonoester.. In terms of biological role, endonuclease that specifically degrades the RNA of RNA-DNA hybrids. This Pelagibacter ubique (strain HTCC1062) protein is Ribonuclease HII.